The chain runs to 436 residues: F-box/LRR-repeat protein At2g40920 (436 aa).

An F-box domain is found at 48-98 (EYLLQNFDLDHVMEILMRFPLTSLTRFKCVSKQWSSLISSRYFCNLLYTTV). LRR repeat units follow at residues 276–301 (NCVV…IHLD) and 393–416 (YYNL…WFDK).

This is F-box/LRR-repeat protein At2g40920 from Arabidopsis thaliana (Mouse-ear cress).